A 208-amino-acid chain; its full sequence is Large ribosomal subunit protein uL3 (208 aa).

It belongs to the universal ribosomal protein uL3 family. In terms of assembly, part of the 50S ribosomal subunit. Forms a cluster with proteins L14 and L19.

In terms of biological role, one of the primary rRNA binding proteins, it binds directly near the 3'-end of the 23S rRNA, where it nucleates assembly of the 50S subunit. This chain is Large ribosomal subunit protein uL3, found in Desulfosudis oleivorans (strain DSM 6200 / JCM 39069 / Hxd3) (Desulfococcus oleovorans).